The chain runs to 349 residues: GMP reductase (349 aa).

108-131 (LDFFKIKKIFSLSSELKYICIDVA) is an NADP(+) binding site. 2 residues coordinate K(+): Gly181 and Gly183. The Thioimidate intermediate role is filled by Cys186. Residue 216 to 239 (IISDGGCTVSGDIAKAFGGGADFV) coordinates NADP(+).

It belongs to the IMPDH/GMPR family. GuaC type 1 subfamily. Homotetramer.

The catalysed reaction is IMP + NH4(+) + NADP(+) = GMP + NADPH + 2 H(+). Its function is as follows. Catalyzes the irreversible NADPH-dependent deamination of GMP to IMP. It functions in the conversion of nucleobase, nucleoside and nucleotide derivatives of G to A nucleotides, and in maintaining the intracellular balance of A and G nucleotides. This chain is GMP reductase, found in Buchnera aphidicola subsp. Schizaphis graminum (strain Sg).